The primary structure comprises 180 residues: Shikimate kinase (180 aa).

14–19 is an ATP binding site; it reads GAGKSC. A Mg(2+)-binding site is contributed by S18. 3 residues coordinate substrate: D36, R60, and G82. R120 provides a ligand contact to ATP. A substrate-binding site is contributed by R139.

This sequence belongs to the shikimate kinase family. As to quaternary structure, monomer. Mg(2+) is required as a cofactor.

It localises to the cytoplasm. It catalyses the reaction shikimate + ATP = 3-phosphoshikimate + ADP + H(+). It functions in the pathway metabolic intermediate biosynthesis; chorismate biosynthesis; chorismate from D-erythrose 4-phosphate and phosphoenolpyruvate: step 5/7. Functionally, catalyzes the specific phosphorylation of the 3-hydroxyl group of shikimic acid using ATP as a cosubstrate. In Xanthomonas oryzae pv. oryzae (strain PXO99A), this protein is Shikimate kinase.